Here is a 316-residue protein sequence, read N- to C-terminus: Protoheme IX farnesyltransferase (316 aa).

Transmembrane regions (helical) follow at residues 35 to 55 (VMVL…GHVQ), 56 to 76 (PAIG…SGCL), 119 to 139 (VVLG…TIVF), 156 to 176 (IVIG…VVTG), 183 to 203 (LILF…LALI), 229 to 246 (IVWY…PVAL), 250 to 272 (GLVY…IRVL), and 283 to 303 (AAMG…SALL).

Belongs to the UbiA prenyltransferase family. Protoheme IX farnesyltransferase subfamily.

The protein resides in the cell inner membrane. It catalyses the reaction heme b + (2E,6E)-farnesyl diphosphate + H2O = Fe(II)-heme o + diphosphate. Its pathway is porphyrin-containing compound metabolism; heme O biosynthesis; heme O from protoheme: step 1/1. Converts heme B (protoheme IX) to heme O by substitution of the vinyl group on carbon 2 of heme B porphyrin ring with a hydroxyethyl farnesyl side group. The polypeptide is Protoheme IX farnesyltransferase (Methylobacterium radiotolerans (strain ATCC 27329 / DSM 1819 / JCM 2831 / NBRC 15690 / NCIMB 10815 / 0-1)).